We begin with the raw amino-acid sequence, 133 residues long: Large ribosomal subunit protein uL15 (133 aa).

Positions 1–60 are disordered; sequence MALENLKPAQGSTKDRKRVGRGQGSGMGKTSTRGGKGQTARTGYKAKRGFEGGQQPLQRR.

This sequence belongs to the universal ribosomal protein uL15 family. In terms of assembly, part of the 50S ribosomal subunit.

Its function is as follows. Binds to the 23S rRNA. This Wolinella succinogenes (strain ATCC 29543 / DSM 1740 / CCUG 13145 / JCM 31913 / LMG 7466 / NCTC 11488 / FDC 602W) (Vibrio succinogenes) protein is Large ribosomal subunit protein uL15.